The primary structure comprises 269 residues: Cytochrome c oxidase subunit 3 (269 aa).

The next 7 helical transmembrane spans lie at 7 to 29, 51 to 71, 90 to 110, 127 to 147, 167 to 187, 205 to 225, and 247 to 267; these read GYLQ…TSFS, IILS…DIIA, GFLL…WAYL, VGID…ILLA, TLYG…FQFL, FYSL…MLVI, and ILYL…VYWW.

It belongs to the cytochrome c oxidase subunit 3 family. As to quaternary structure, component of the cytochrome c oxidase (complex IV, CIV), a multisubunit enzyme composed of a catalytic core of 3 subunits and several supernumerary subunits. The complex exists as a monomer or a dimer and forms supercomplexes (SCs) in the inner mitochondrial membrane with ubiquinol-cytochrome c oxidoreductase (cytochrome b-c1 complex, complex III, CIII).

The protein resides in the mitochondrion inner membrane. The enzyme catalyses 4 Fe(II)-[cytochrome c] + O2 + 8 H(+)(in) = 4 Fe(III)-[cytochrome c] + 2 H2O + 4 H(+)(out). Functionally, component of the cytochrome c oxidase, the last enzyme in the mitochondrial electron transport chain which drives oxidative phosphorylation. The respiratory chain contains 3 multisubunit complexes succinate dehydrogenase (complex II, CII), ubiquinol-cytochrome c oxidoreductase (cytochrome b-c1 complex, complex III, CIII) and cytochrome c oxidase (complex IV, CIV), that cooperate to transfer electrons derived from NADH and succinate to molecular oxygen, creating an electrochemical gradient over the inner membrane that drives transmembrane transport and the ATP synthase. Cytochrome c oxidase is the component of the respiratory chain that catalyzes the reduction of oxygen to water. Electrons originating from reduced cytochrome c in the intermembrane space (IMS) are transferred via the dinuclear copper A center (CU(A)) of subunit 2 and heme A of subunit 1 to the active site in subunit 1, a binuclear center (BNC) formed by heme A3 and copper B (CU(B)). The BNC reduces molecular oxygen to 2 water molecules using 4 electrons from cytochrome c in the IMS and 4 protons from the mitochondrial matrix. This chain is Cytochrome c oxidase subunit 3 (COX3), found in Candida parapsilosis (Yeast).